A 583-amino-acid polypeptide reads, in one-letter code: ATP-dependent lipid A-core flippase (583 aa).

6 consecutive transmembrane segments (helical) span residues 32 to 52 (VAFLISIIALVTFSATNTGFL), 71 to 91 (LHLLPFMLFGLLAIRALAGFI), 115 to 135 (LMSLPVSFFDAVSAGVVTSKL), 160 to 180 (ILGMVGYMLYLDWQLTLIFAV), 259 to 279 (SMVVELLAGVALALVVFYAVG), and 286 to 306 (FAAFIGALLMLIGPVKTLTSL). In terms of domain architecture, ABC transmembrane type-1 spans 34 to 312 (FLISIIALVT…LTSLNEELQV (279 aa)). The 237-residue stretch at 344–580 (IVFENVTLQY…DGHYAKLYRK (237 aa)) folds into the ABC transporter domain. 378 to 385 (GRSGGGKT) is an ATP binding site.

Belongs to the ABC transporter superfamily. Lipid exporter (TC 3.A.1.106) family. As to quaternary structure, homodimer.

The protein localises to the cell inner membrane. It carries out the reaction ATP + H2O + lipid A-core oligosaccharideSide 1 = ADP + phosphate + lipid A-core oligosaccharideSide 2.. Involved in lipopolysaccharide (LPS) biosynthesis. Translocates lipid A-core from the inner to the outer leaflet of the inner membrane. Transmembrane domains (TMD) form a pore in the inner membrane and the ATP-binding domain (NBD) is responsible for energy generation. The chain is ATP-dependent lipid A-core flippase from Methylobacillus flagellatus (strain ATCC 51484 / DSM 6875 / VKM B-1610 / KT).